The chain runs to 116 residues: Nucleoid-associated protein PMM0020 (116 aa).

The segment covering 87 to 98 (ESSTTTMKERMN) has biased composition (basic and acidic residues). The interval 87-116 (ESSTTTMKERMNDLTGGLNLNLPGLDNNDS) is disordered. The span at 99–116 (DLTGGLNLNLPGLDNNDS) shows a compositional bias: low complexity.

Belongs to the YbaB/EbfC family. Homodimer.

It localises to the cytoplasm. The protein resides in the nucleoid. Binds to DNA and alters its conformation. May be involved in regulation of gene expression, nucleoid organization and DNA protection. The sequence is that of Nucleoid-associated protein PMM0020 from Prochlorococcus marinus subsp. pastoris (strain CCMP1986 / NIES-2087 / MED4).